Here is a 233-residue protein sequence, read N- to C-terminus: Leucyl/phenylalanyl-tRNA--protein transferase (233 aa).

It belongs to the L/F-transferase family.

It localises to the cytoplasm. The catalysed reaction is N-terminal L-lysyl-[protein] + L-leucyl-tRNA(Leu) = N-terminal L-leucyl-L-lysyl-[protein] + tRNA(Leu) + H(+). It catalyses the reaction N-terminal L-arginyl-[protein] + L-leucyl-tRNA(Leu) = N-terminal L-leucyl-L-arginyl-[protein] + tRNA(Leu) + H(+). It carries out the reaction L-phenylalanyl-tRNA(Phe) + an N-terminal L-alpha-aminoacyl-[protein] = an N-terminal L-phenylalanyl-L-alpha-aminoacyl-[protein] + tRNA(Phe). Functionally, functions in the N-end rule pathway of protein degradation where it conjugates Leu, Phe and, less efficiently, Met from aminoacyl-tRNAs to the N-termini of proteins containing an N-terminal arginine or lysine. The protein is Leucyl/phenylalanyl-tRNA--protein transferase of Anaeromyxobacter dehalogenans (strain 2CP-C).